The chain runs to 422 residues: Phosphoserine aminotransferase 2, chloroplastic (422 aa).

Residues 1–50 (MAASTNSFLIGNQTQIPSLKPKSISQSFIHFTKPNTINLTTRTKSVSIRC) constitute a chloroplast transit peptide. Alanine 51 bears the N-acetylalanine mark. Arginine 101 is a binding site for L-glutamate. Pyridoxal 5'-phosphate is bound by residues 135-136 (AT), tryptophan 161, threonine 211, aspartate 233, and glutamine 256. Lysine 257 carries the N6-(pyridoxal phosphate)lysine modification. 298–299 (NT) lines the pyridoxal 5'-phosphate pocket.

It belongs to the class-V pyridoxal-phosphate-dependent aminotransferase family. SerC subfamily. Requires pyridoxal 5'-phosphate as cofactor.

The protein localises to the plastid. It is found in the chloroplast. The enzyme catalyses O-phospho-L-serine + 2-oxoglutarate = 3-phosphooxypyruvate + L-glutamate. It carries out the reaction 4-(phosphooxy)-L-threonine + 2-oxoglutarate = (R)-3-hydroxy-2-oxo-4-phosphooxybutanoate + L-glutamate. It participates in amino-acid biosynthesis; L-serine biosynthesis; L-serine from 3-phospho-D-glycerate: step 2/3. Involved in the plastidial phosphorylated pathway of serine biosynthesis (PPSB). Catalyzes the reversible conversion of 3-phosphohydroxypyruvate to phosphoserine. The chain is Phosphoserine aminotransferase 2, chloroplastic (PSAT2) from Arabidopsis thaliana (Mouse-ear cress).